The primary structure comprises 334 residues: Phospho-N-acetylmuramoyl-pentapeptide-transferase (334 aa).

The next 9 membrane-spanning stretches (helical) occupy residues 5 to 25 (VVWL…PVTI), 52 to 72 (PTMG…VLLV), 81 to 101 (GLVV…DDFI), 116 to 136 (KILG…FKLG), 148 to 168 (GISF…VLLG), 181 to 200 (GLAS…LALV), 230 to 250 (VFMG…GAVV), 256 to 276 (LLVV…IQVI), and 309 to 329 (FWLL…DFWL).

It belongs to the glycosyltransferase 4 family. MraY subfamily. Mg(2+) serves as cofactor.

Its subcellular location is the cell membrane. The enzyme catalyses UDP-N-acetyl-alpha-D-muramoyl-L-alanyl-gamma-D-glutamyl-meso-2,6-diaminopimeloyl-D-alanyl-D-alanine + di-trans,octa-cis-undecaprenyl phosphate = di-trans,octa-cis-undecaprenyl diphospho-N-acetyl-alpha-D-muramoyl-L-alanyl-D-glutamyl-meso-2,6-diaminopimeloyl-D-alanyl-D-alanine + UMP. It participates in cell wall biogenesis; peptidoglycan biosynthesis. Catalyzes the initial step of the lipid cycle reactions in the biosynthesis of the cell wall peptidoglycan: transfers peptidoglycan precursor phospho-MurNAc-pentapeptide from UDP-MurNAc-pentapeptide onto the lipid carrier undecaprenyl phosphate, yielding undecaprenyl-pyrophosphoryl-MurNAc-pentapeptide, known as lipid I. The protein is Phospho-N-acetylmuramoyl-pentapeptide-transferase of Desulforamulus reducens (strain ATCC BAA-1160 / DSM 100696 / MI-1) (Desulfotomaculum reducens).